The primary structure comprises 361 residues: MSFNTFGHMFRVTTFGESHGVAIGCVVDGCPPLIPLTEADIQGDLDRRRPGQSRFTTQRQEADQVKILSGVMAHPETGVQVTTGTPIALLIENTDQRSKDYSEIQNKFRPGHADFTYEAKYGIRDYRGGGRSSARETATRVAAGAVARKVIAGMTVRGALVQIGPHQIDRDKWDWAEIGNNPFFCPDKDKAAFFADYLDGIRKSGSSIGAVIEVVAEGVPAGLGAPIYAKLDTDLAAALMSINAVKGVEIGDGFATAALTGEENADEMRMGNAGPQFLSNHAGGILGGISTGQPVVARFAVKPTSSILSPRKTIDRAGHDTDILTKGRHDPCVGIRAVPVGEAMVACVLADHLLRHRGQVG.

Residues Arg48 and Arg54 each coordinate NADP(+). Residues 131–133 (RSS), 243–244 (NA), Gly287, 302–306 (KPTSS), and Arg328 each bind FMN.

This sequence belongs to the chorismate synthase family. Homotetramer. FMNH2 serves as cofactor.

It catalyses the reaction 5-O-(1-carboxyvinyl)-3-phosphoshikimate = chorismate + phosphate. The protein operates within metabolic intermediate biosynthesis; chorismate biosynthesis; chorismate from D-erythrose 4-phosphate and phosphoenolpyruvate: step 7/7. Catalyzes the anti-1,4-elimination of the C-3 phosphate and the C-6 proR hydrogen from 5-enolpyruvylshikimate-3-phosphate (EPSP) to yield chorismate, which is the branch point compound that serves as the starting substrate for the three terminal pathways of aromatic amino acid biosynthesis. This reaction introduces a second double bond into the aromatic ring system. This Rhodopseudomonas palustris (strain HaA2) protein is Chorismate synthase.